A 112-amino-acid polypeptide reads, in one-letter code: Urease subunit beta (112 aa).

It belongs to the urease beta subunit family. In terms of assembly, heterotrimer of UreA (gamma), UreB (beta) and UreC (alpha) subunits. Three heterotrimers associate to form the active enzyme.

Its subcellular location is the cytoplasm. It carries out the reaction urea + 2 H2O + H(+) = hydrogencarbonate + 2 NH4(+). It participates in nitrogen metabolism; urea degradation; CO(2) and NH(3) from urea (urease route): step 1/1. This Thioalkalivibrio sulfidiphilus (strain HL-EbGR7) protein is Urease subunit beta.